Reading from the N-terminus, the 321-residue chain is MRTSQQAVNRVVLIGGGSVGVSYAFALMNQGVTEELAIIDLDADKALGDVMDLNHGKAFAPSLTNVWLGEYGDCKDADIVCICAGANQQSGETRLDLVEKNMKIFKEIVTDVMNSGFNGIFLIATNPVDILTQAVISFSGLPPHRVIGSGTTLDTARLRYELGEYFHLSPKNIHAYIIGEHGDTELPLWSTATIGTVPLLTYLNRSESYTTEDLDDIFTNVRDAAYRIIQKKGATYYGIAMSLVRVTEAILKDEHSILTTSSFLQGEYGVDNVCIGVPTIINRNGVSEIIEVPMNEDEQKQFNHSVQTLKGIYEPTMQMMK.

NAD(+)-binding positions include Val-19, Asp-40, Lys-45, Tyr-71, and 85–86 (GA). Substrate contacts are provided by residues Gln-88, Arg-94, and 126–129 (NPVD). Residues 124–126 (ATN) and Ser-149 contribute to the NAD(+) site. Residue 154–157 (DTAR) coordinates substrate. 2 residues coordinate beta-D-fructose 1,6-bisphosphate: Arg-159 and His-174. His-181 (proton acceptor) is an active-site residue. Phosphotyrosine is present on Tyr-226. Thr-235 serves as a coordination point for substrate.

It belongs to the LDH/MDH superfamily. LDH family. Homotetramer.

It is found in the cytoplasm. The catalysed reaction is (S)-lactate + NAD(+) = pyruvate + NADH + H(+). It functions in the pathway fermentation; pyruvate fermentation to lactate; (S)-lactate from pyruvate: step 1/1. Its activity is regulated as follows. Allosterically activated by fructose 1,6-bisphosphate (FBP). Its function is as follows. Catalyzes the conversion of lactate to pyruvate. This is L-lactate dehydrogenase from Oceanobacillus iheyensis (strain DSM 14371 / CIP 107618 / JCM 11309 / KCTC 3954 / HTE831).